A 1204-amino-acid polypeptide reads, in one-letter code: MKDQQTVIMTECTSLQFVSPFAFEAMQKVDVVCLASLSDPELRLLLPCLVRMALCAPADQSQSWAQDKKLILRLLSGVEAVNSIVALLSVDFHALEQDASKEQQLRHKLGGGSGESILVSQLQHGLTLEFEHSDSPRRLRLVLSELLAIMNKVSESNGEFFFKSSELFESPVYLEEAADVLCILQAELPSLLPIVDVAEALLHVRNGAWFLCLLVANVPDSFNEVCRGLIKNGERQDEESLGGRRRTDALRFLCKMNPSQALKVRGMVVEECHLPGLGVALTLDHTKNEACEDGVSDLVCFVSGLLLGTNAKVRTWFGTFIRNGQQRKRETSSSVLWQMRRQLLLELMGILPTVRSTRIVEEADVDMEPNVSVYSGLKEEHVVKASALLRLYCALMGIAGLKPTEEEAEQLLQLMTSRPPATPAGVRFVSLSFCMLLAFSTLVSTPEQEQLMVVWLSWMIKEEAYFESTSGVSASFGEMLLLVAMYFHSNQLSAIIDLVCSTLGMKIVIKPSSLSRMKTIFTQEIFTEQVVTAHAVRVPVTSNLSANITGFLPIHCIYQLLRSRSFTKHKVSIKDWIYRQLCETSTPLHPQLLPLIDVYINSILTPASKSNPEATNQPVTEQEILNIFQGVIGGDNIRLNQRFSITAQLLVLYYILSYEEALLANTKTLAAMQRKPKSYSSSLMDQIPIKFLIRQAQGLQQELGGLHSALLRLLATNYPHLCIVDDWICEEEITGTDALLRRMLLTNNAKNHSPKQLQEAFSAVPVNNTQVMQIIEHLTLLSASELIPYAEVLTSNMSQLLNSGVPRRILQTVNKLWMVLNTVMPRRLWVMTVNALQPSIKFVRQQKYTQNDLMIDPLIVLRCDQRVHRCPPLMDITLHMLNGYLLASKAYLSAHLKETEQDRPSQNNTIGLVGQTDAPEVTREELKNALLAAQDSAAVQILLEICLPTEEEKANGVNPDSLLRNVQSVITTSAPNKGMEEGEDNLLCNLREVQCLICCLLHQMYIADPNIAKLVHFQGYPCELLPLTVAGIPSMHICLDFIPELIAQPELEKQIFAIQLLSHLCIQYALPKSLSVARLAVNVMGTLLTVLTQAKRYAFFMPTLPSLVSFCRAFPPLYEDIMSLLIQIGQVCASDVATQTRDIDPIITRLQQIKEKPSGWSQICKDSSYKNGSRDTGSMDPDVQLCHCIERTVIEIINMSVSGI.

A helical membrane pass occupies residues 428 to 444; sequence FVSLSFCMLLAFSTLVS.

The protein belongs to the Integrator subunit 2 family. As to quaternary structure, component of the Integrator complex, composed of core subunits INTS1, INTS2, INTS3, INTS4, INTS5, INTS6, INTS7, INTS8, INTS9/RC74, INTS10, INTS11/CPSF3L, INTS12, INTS13, INTS14 and INTS15. The core complex associates with protein phosphatase 2A subunits PPP2CA and PPP2R1A, to form the Integrator-PP2A (INTAC) complex.

It localises to the nucleus. The protein resides in the nucleus membrane. Its subcellular location is the cytoplasm. Component of the integrator complex, a multiprotein complex that terminates RNA polymerase II (Pol II) transcription in the promoter-proximal region of genes. The integrator complex provides a quality checkpoint during transcription elongation by driving premature transcription termination of transcripts that are unfavorably configured for transcriptional elongation: the complex terminates transcription by (1) catalyzing dephosphorylation of the C-terminal domain (CTD) of Pol II subunit POLR2A/RPB1 and SUPT5H/SPT5, (2) degrading the exiting nascent RNA transcript via endonuclease activity and (3) promoting the release of Pol II from bound DNA. The integrator complex is also involved in terminating the synthesis of non-coding Pol II transcripts, such as enhancer RNAs (eRNAs), small nuclear RNAs (snRNAs), telomerase RNAs and long non-coding RNAs (lncRNAs). Mediates recruitment of cytoplasmic dynein to the nuclear envelope, probably as component of the integrator complex. This chain is Integrator complex subunit 2, found in Homo sapiens (Human).